We begin with the raw amino-acid sequence, 285 residues long: MRLIIVSGRSGSGKSTALNVLEDNGFYCIDNLPAGLLPELAERALLHTELLHPQVAVSIDARNLPSQLKRFPELLEEVRARHIQCDVLYLDADDETLLKRFSETRRRHPLTNESRSLAEAIRDEELLLAAIIDHADLKIDTTHLNLYQLRDMLKLRLLNKPEPGTAFLIESFGFKRGMPVDADLVFDVRCLPNPYWKAELRDFSGLDQPVIDYLAAQPDVEEMFQDIHAYLNKWLPRFAASNRAYVTIAIGCTGGHHRSVYLAERLGLALKEPLKNLQVRHRDLA.

8 to 15 (GRSGSGKS) serves as a coordination point for ATP. 60-63 (DARN) is a GTP binding site.

Belongs to the RapZ-like family.

Displays ATPase and GTPase activities. This Stutzerimonas stutzeri (Pseudomonas stutzeri) protein is Nucleotide-binding protein in ptsN-ptsO intergenic region.